Reading from the N-terminus, the 110-residue chain is U-scoloptoxin(16)-Er6a (110 aa).

Residues 1-26 (MTSTRKLSVSCLIVFMVSSLIAVSSG) form the signal peptide.

This sequence belongs to the scoloptoxin-16 family. In terms of processing, contains 4 disulfide bonds. As to expression, expressed by the venom gland.

The protein resides in the secreted. In Ethmostigmus rubripes (Giant centipede), this protein is U-scoloptoxin(16)-Er6a.